Reading from the N-terminus, the 167-residue chain is 3-isopropylmalate dehydratase small subunit (167 aa).

It belongs to the LeuD family. LeuD type 2 subfamily. Heterodimer of LeuC and LeuD.

The enzyme catalyses (2R,3S)-3-isopropylmalate = (2S)-2-isopropylmalate. Its pathway is amino-acid biosynthesis; L-leucine biosynthesis; L-leucine from 3-methyl-2-oxobutanoate: step 2/4. Catalyzes the isomerization between 2-isopropylmalate and 3-isopropylmalate, via the formation of 2-isopropylmaleate. The chain is 3-isopropylmalate dehydratase small subunit from Wolinella succinogenes (strain ATCC 29543 / DSM 1740 / CCUG 13145 / JCM 31913 / LMG 7466 / NCTC 11488 / FDC 602W) (Vibrio succinogenes).